A 572-amino-acid chain; its full sequence is Methionine--tRNA ligase (572 aa).

The 'HIGH' region signature appears at 11 to 21 (PYINGIKHLGN). Positions 143, 146, 156, and 159 each coordinate Zn(2+). Residues 346 to 350 (QFSTS) carry the 'KMSKS' region motif. Position 349 (Thr349) interacts with ATP.

The protein belongs to the class-I aminoacyl-tRNA synthetase family. MetG type 1 subfamily. Monomer. Zn(2+) is required as a cofactor.

The protein localises to the cytoplasm. It catalyses the reaction tRNA(Met) + L-methionine + ATP = L-methionyl-tRNA(Met) + AMP + diphosphate. Is required not only for elongation of protein synthesis but also for the initiation of all mRNA translation through initiator tRNA(fMet) aminoacylation. The sequence is that of Methionine--tRNA ligase from Ruegeria pomeroyi (strain ATCC 700808 / DSM 15171 / DSS-3) (Silicibacter pomeroyi).